The sequence spans 159 residues: uncharacterized protein (159 aa).

In terms of domain architecture, N-acetyltransferase spans 7 to 151 (LLINYKTLEE…NPLVWHPASE (145 aa)).

This is an uncharacterized protein from Bacillus licheniformis (strain ATCC 14580 / DSM 13 / JCM 2505 / CCUG 7422 / NBRC 12200 / NCIMB 9375 / NCTC 10341 / NRRL NRS-1264 / Gibson 46).